Here is a 203-residue protein sequence, read N- to C-terminus: Galactoside O-acetyltransferase (203 aa).

Residues Asp17, Ser71, Asn85, and Asp93 each contribute to the substrate site. Asn85 provides a ligand contact to acetyl-CoA. Residue His115 is the Proton donor/acceptor of the active site. Acetyl-CoA contacts are provided by residues Ser142, Ala160, 165-166 (TK), Arg180, and Arg183.

It belongs to the transferase hexapeptide repeat family. As to quaternary structure, homotrimer. In terms of processing, the N-terminus of this protein is heterogeneous because the initiator methionine is only partially cleaved.

The protein resides in the cytoplasm. The enzyme catalyses a beta-D-galactoside + acetyl-CoA = a 6-acetyl-beta-D-galactoside + CoA. Its function is as follows. Catalyzes the CoA-dependent transfer of an acetyl group to the 6-O-methyl position of a range of galactosides, glucosides, and lactosides. May assist cellular detoxification by acetylating non-metabolizable pyranosides, thereby preventing their reentry into the cell. The chain is Galactoside O-acetyltransferase (lacA) from Escherichia coli (strain K12).